Reading from the N-terminus, the 308-residue chain is ATP synthase gamma chain (308 aa).

It belongs to the ATPase gamma chain family. F-type ATPases have 2 components, CF(1) - the catalytic core - and CF(0) - the membrane proton channel. CF(1) has five subunits: alpha(3), beta(3), gamma(1), delta(1), epsilon(1). CF(0) has three main subunits: a, b and c.

Its subcellular location is the cell inner membrane. In terms of biological role, produces ATP from ADP in the presence of a proton gradient across the membrane. The gamma chain is believed to be important in regulating ATPase activity and the flow of protons through the CF(0) complex. This is ATP synthase gamma chain from Bartonella tribocorum (strain CIP 105476 / IBS 506).